We begin with the raw amino-acid sequence, 176 residues long: RNA polymerase sigma factor SigZ (176 aa).

The short motif at 30–43 (DLLQIVFMKIQVHL) is the Polymerase core binding element. Residues 125-144 (QKELSEKLGISYSGAKSRVQ) constitute a DNA-binding region (H-T-H motif).

It belongs to the sigma-70 factor family. ECF subfamily.

Its function is as follows. Sigma factors are initiation factors that promote the attachment of RNA polymerase to specific initiation sites and are then released. This Bacillus subtilis (strain 168) protein is RNA polymerase sigma factor SigZ (sigZ).